A 138-amino-acid polypeptide reads, in one-letter code: Putative pre-16S rRNA nuclease (138 aa).

This sequence belongs to the YqgF nuclease family.

It is found in the cytoplasm. Its function is as follows. Could be a nuclease involved in processing of the 5'-end of pre-16S rRNA. This chain is Putative pre-16S rRNA nuclease, found in Carboxydothermus hydrogenoformans (strain ATCC BAA-161 / DSM 6008 / Z-2901).